The following is a 674-amino-acid chain: Tripartite terminase subunit 3 (674 aa).

Residues 212–219 carry the Walker A motif motif; that stretch reads VPRRHGKT. Positions 305–310 match the Walker B motif motif; it reads LLLVDE. Glu-310 (for ATPase activity) is an active-site residue. Active-site for nuclease activity residues include Asp-463, Glu-534, and Asp-651.

It belongs to the herpesviridae TRM3 protein family. In terms of assembly, interacts with the terminase subunits TRM1 and TRM2. Interacts with portal protein.

Its subcellular location is the host nucleus. Component of the molecular motor that translocates viral genomic DNA in empty capsid during DNA packaging. Forms a tripartite terminase complex together with TRM1 and TRM2 in the host cytoplasm. Once the complex reaches the host nucleus, it interacts with the capsid portal vertex. This portal forms a ring in which genomic DNA is translocated into the capsid. TRM3 carries an RNase H-like nuclease activity that plays an important role for the cleavage of concatemeric viral DNA into unit length genomes. This is Tripartite terminase subunit 3 from Homo sapiens (Human).